A 216-amino-acid polypeptide reads, in one-letter code: Cytochrome c biogenesis ATP-binding export protein CcmA (216 aa).

The region spanning 5–216 (ISVDTLLSAS…RKIRLDYRFV (212 aa)) is the ABC transporter domain. ATP is bound at residue 43–50 (GPNGAGKT).

This sequence belongs to the ABC transporter superfamily. CcmA exporter (TC 3.A.1.107) family. In terms of assembly, the complex is composed of two ATP-binding proteins (CcmA) and two transmembrane proteins (CcmB).

The protein localises to the cell inner membrane. It catalyses the reaction heme b(in) + ATP + H2O = heme b(out) + ADP + phosphate + H(+). In terms of biological role, part of the ABC transporter complex CcmAB involved in the biogenesis of c-type cytochromes; once thought to export heme, this seems not to be the case, but its exact role is uncertain. Responsible for energy coupling to the transport system. The chain is Cytochrome c biogenesis ATP-binding export protein CcmA from Shewanella oneidensis (strain ATCC 700550 / JCM 31522 / CIP 106686 / LMG 19005 / NCIMB 14063 / MR-1).